The chain runs to 226 residues: Large ribosomal subunit protein uL1 (226 aa).

Belongs to the universal ribosomal protein uL1 family. Part of the 50S ribosomal subunit.

In terms of biological role, binds directly to 23S rRNA. The L1 stalk is quite mobile in the ribosome, and is involved in E site tRNA release. Its function is as follows. Protein L1 is also a translational repressor protein, it controls the translation of the L11 operon by binding to its mRNA. This chain is Large ribosomal subunit protein uL1, found in Buchnera aphidicola subsp. Cinara cedri (strain Cc).